The chain runs to 273 residues: 2,3,4,5-tetrahydropyridine-2,6-dicarboxylate N-succinyltransferase (273 aa).

Substrate-binding residues include arginine 104 and aspartate 141.

It belongs to the transferase hexapeptide repeat family. Homotrimer.

The protein localises to the cytoplasm. It catalyses the reaction (S)-2,3,4,5-tetrahydrodipicolinate + succinyl-CoA + H2O = (S)-2-succinylamino-6-oxoheptanedioate + CoA. The protein operates within amino-acid biosynthesis; L-lysine biosynthesis via DAP pathway; LL-2,6-diaminopimelate from (S)-tetrahydrodipicolinate (succinylase route): step 1/3. This Laribacter hongkongensis (strain HLHK9) protein is 2,3,4,5-tetrahydropyridine-2,6-dicarboxylate N-succinyltransferase.